We begin with the raw amino-acid sequence, 555 residues long: Hydroxylamine reductase (555 aa).

Cys5, Cys8, Cys17, and Cys23 together coordinate [4Fe-4S] cluster. His248, Glu272, Cys316, Cys408, Cys436, Cys461, Glu496, and Lys498 together coordinate hybrid [4Fe-2O-2S] cluster. Cys408 carries the post-translational modification Cysteine persulfide.

Belongs to the HCP family. The cofactor is [4Fe-4S] cluster. Hybrid [4Fe-2O-2S] cluster serves as cofactor.

Its subcellular location is the cytoplasm. It catalyses the reaction A + NH4(+) + H2O = hydroxylamine + AH2 + H(+). In terms of biological role, catalyzes the reduction of hydroxylamine to form NH(3) and H(2)O. This chain is Hydroxylamine reductase, found in Natranaerobius thermophilus (strain ATCC BAA-1301 / DSM 18059 / JW/NM-WN-LF).